A 257-amino-acid polypeptide reads, in one-letter code: MGSLHDYVLIITGSASGIGLATATIALDEGARVLGVDISSPPRSLIDHSNFKFVEGNLSLEPTPRRVVEACVKAFGGRIDGLLNIAGVMDLNQSVDSLSDTMWESCIAINLTAPVKLMREVIPIMRQQKSGSIVNVASKAALSGAVSGVAYTASKHGLVGATKNVAWRFKQENIRCNAVCPGAVDGTSIHRGLETSQFDSEALGTMSLIHEAHMRDRERGIHIQPEDIARSLLFLVSSRSNGINGAIIPIDNAWSTI.

The helical transmembrane segment at 7 to 26 threads the bilayer; it reads YVLIITGSASGIGLATATIA. Ile11 provides a ligand contact to NADP(+). N-linked (GlcNAc...) asparagine glycans are attached at residues Asn57, Asn92, and Asn110. 4 residues coordinate NADP(+): Arg119, Tyr151, Lys155, and Val184. Tyr151 serves as the catalytic Proton donor. Lys155 serves as the catalytic Lowers pKa of active site Tyr.

It belongs to the short-chain dehydrogenases/reductases (SDR) family.

The protein resides in the membrane. The catalysed reaction is asnovolin H + A = chermesin D + AH2. The protein operates within secondary metabolite biosynthesis; terpenoid biosynthesis. Its function is as follows. Short chain dehydrogenase; part of the gene cluster that mediates the biosynthesis of novofumigatonin, a heavily oxygenated meroterpenoid containing a unique orthoester moiety. The first step of the pathway is the synthesis of 3,5-dimethylorsellinic acid (DMOA) by the polyketide synthase nvfA via condensation of one acetyl-CoA starter unit with 3 malonyl-CoA units and 2 methylations. DMOA is then converted to farnesyl-DMOA by the farnesyltransferase nvfB. Epoxydation by FAD-dependent monooxygenase nvfK, followed by a protonation-initiated cyclization catalyzed by the terpene cyclase nvfL leads to the production of asnavolin H. The short chain dehydrogenase nvfC then as a 3-OH dehydrogenase of asnovolin H to yield chemesin D. There are two branches to synthesize asnovolin A from chemesin D. In one branch, chemesin D undergoes Baeyer-Villiger oxidation by nvfH, methylation by nvfJ, and enoyl reduction by the nvfM D enoylreductase that reduces the double bond between C-5'and C-6', to form respectively asnovolin I, asnovolin K, and asnovolin A. In the other branch, the methylation precedes the Baeyer-Villiger oxidation and the enoyl reduction to yield asnovolin A via the asnovolin J intermediate. Asnovolin A is further converted to fumigatonoid A by the Fe(II)/2-oxoglutarate-dependent dioxygenase nvfI that catalyzes an endoperoxidation reaction. The alpha/beta hydrolase nvfD then acts as an epimerase that converts fumigatonoid A to its C-5' epimer, which then undergoes spontaneous or nvfD-catalyzed lactonization. The following step utilizes the ketoreductase nvfG to produce fumigatonoid B. The dioxygenase nvfE further converts fumigatonoid B into fumigatonoid C. Finally the Fe(II)/2-oxoglutarate-dependent dioxygenase nvfF catalyzes two rounds of oxidation to transform fumigatonoid C into the end product, novofumigatonin A. The chain is Asnovolin H dehydrogenase nvfC from Aspergillus novofumigatus (strain IBT 16806).